The primary structure comprises 613 residues: DBH-like monooxygenase protein 1 (613 aa).

An N-terminal signal peptide occupies residues 1–19 (MCGWPLLVLWALLPATAAG). At 20–587 (SPGRSYPHRV…PLVCEKAASP (568 aa)) the chain is on the lumenal side. Residues 35–148 (GKYWLHWGRQ…STVRVIWAYH (114 aa)) form the DOMON domain. A glycan (N-linked (GlcNAc...) asparagine) is linked at N114. Y203 is a catalytic residue. Cystine bridges form between C205–C257 and C242–C269. Cu cation-binding residues include H235 and H236. N-linked (GlcNAc...) asparagine glycosylation is present at N247. Cu cation-binding residues include H307, H389, H391, and M464. 3 disulfide bridges follow: C364/C480, C368/C550, and C443/C465. H389 is a catalytic residue. Residues N476 and N517 are each glycosylated (N-linked (GlcNAc...) asparagine). Residues 588 to 608 (PLHGIFSLRLLTCALLLGSML) traverse the membrane as a helical segment.

This sequence belongs to the copper type II ascorbate-dependent monooxygenase family. Cu(2+) serves as cofactor. N-glycosylated. As to expression, broadly exprressed, with highest levels in salivary gland and ovary.

The protein localises to the endoplasmic reticulum membrane. The polypeptide is DBH-like monooxygenase protein 1 (Moxd1) (Mus musculus (Mouse)).